Consider the following 220-residue polypeptide: Ribose-5-phosphate isomerase A (220 aa).

Substrate-binding positions include 28 to 31 (TGST), 81 to 84 (DGAD), and 94 to 97 (KGGG). Glutamate 103 functions as the Proton acceptor in the catalytic mechanism. Lysine 121 serves as a coordination point for substrate.

It belongs to the ribose 5-phosphate isomerase family. As to quaternary structure, homodimer.

The catalysed reaction is aldehydo-D-ribose 5-phosphate = D-ribulose 5-phosphate. It participates in carbohydrate degradation; pentose phosphate pathway; D-ribose 5-phosphate from D-ribulose 5-phosphate (non-oxidative stage): step 1/1. Its function is as follows. Catalyzes the reversible conversion of ribose-5-phosphate to ribulose 5-phosphate. The polypeptide is Ribose-5-phosphate isomerase A (Shewanella sp. (strain W3-18-1)).